We begin with the raw amino-acid sequence, 193 residues long: MIDYILLIISTALINNFVLVKFLGLCPFMGVSKKIETAIGMGLATMFVLTVASLCAYLVEHYLLTPLHANFLRTLIFILVIAVVVQFTEMVIHKTSPTLYRLLGIFLPLITTNCAVLGVALLNINLAHNLTQSVIYGFSASLGFSLVLVLFAALRERLTAADIPLPFRGASIALITAGLMSLAFMGFSGLVRV.

The next 6 membrane-spanning stretches (helical) occupy residues 5–25, 39–59, 72–92, 102–122, 134–154, and 171–191; these read ILLIISTALINNFVLVKFLGL, IGMGLATMFVLTVASLCAYLV, LRTLIFILVIAVVVQFTEMVI, LLGIFLPLITTNCAVLGVALL, VIYGFSASLGFSLVLVLFAAL, and SIALITAGLMSLAFMGFSGLV.

The protein belongs to the NqrDE/RnfAE family. In terms of assembly, the complex is composed of six subunits: RnfA, RnfB, RnfC, RnfD, RnfE and RnfG.

It localises to the cell inner membrane. Part of a membrane-bound complex that couples electron transfer with translocation of ions across the membrane. The chain is Ion-translocating oxidoreductase complex subunit A from Histophilus somni (strain 129Pt) (Haemophilus somnus).